The chain runs to 122 residues: Large ribosomal subunit protein bL12 (122 aa).

Belongs to the bacterial ribosomal protein bL12 family. In terms of assembly, homodimer. Part of the ribosomal stalk of the 50S ribosomal subunit. Forms a multimeric L10(L12)X complex, where L10 forms an elongated spine to which 2 to 4 L12 dimers bind in a sequential fashion. Binds GTP-bound translation factors.

Forms part of the ribosomal stalk which helps the ribosome interact with GTP-bound translation factors. Is thus essential for accurate translation. This Fusobacterium nucleatum subsp. nucleatum (strain ATCC 25586 / DSM 15643 / BCRC 10681 / CIP 101130 / JCM 8532 / KCTC 2640 / LMG 13131 / VPI 4355) protein is Large ribosomal subunit protein bL12.